The following is a 490-amino-acid chain: Prostaglandin E2 receptor EP4 subtype (490 aa).

Topologically, residues 1-19 are extracellular; the sequence is MSTPGVNASASLSPDRLNS. Asparagine 7 carries an N-linked (GlcNAc...) asparagine glycan. Residues 20 to 43 traverse the membrane as a helical segment; it reads PVTIPAVMFIFGVVGNLVAIVVLC. Residues 44-55 are Cytoplasmic-facing; the sequence is KSRKEQKETTFY. The helical transmembrane segment at 56–79 threads the bilayer; the sequence is TLVCGLAVTDLLGTLLVSPVTIAT. Over 80 to 96 the chain is Extracellular; sequence YMKGQWPGGQPLCEYST. Cysteine 92 and cysteine 170 are disulfide-bonded. Residues 97-115 form a helical membrane-spanning segment; the sequence is FILLFFSLSGLSIICAMSV. At 116–135 the chain is on the cytoplasmic side; sequence ERYLAINHAYFYSHYVDKRL. The chain crosses the membrane as a helical span at residues 136-160; that stretch reads AGLTLFAVYASNVLFCALPNMGLGS. Residues 161–184 lie on the Extracellular side of the membrane; that stretch reads SRLQYPDTWCFIDWTTNVTAHAAY. Residues 185-211 traverse the membrane as a helical segment; that stretch reads SYMYAGFSSFLILATVLCNVLVCGALL. Topologically, residues 212–269 are cytoplasmic; it reads RMHRQFMRRTSLGTEQHHAAAAAVTSVASRGHPAASPALPRLSDFRRRRSFRRIAGAE. Residues 270–297 form a helical membrane-spanning segment; the sequence is IQMVILLIATSLVVLICSIPLVVRVFVN. The Extracellular portion of the chain corresponds to 298–314; sequence QLYQPSLEREVSKNPDL. A helical membrane pass occupies residues 315–334; it reads QAIRIASVNPILDPWIYILL. Topologically, residues 335–490 are cytoplasmic; that stretch reads RKTVLSKAIE…ETLNLSEKCI (156 aa). The segment at 359 to 378 is disordered; the sequence is ERSGQHCSDSQRTSSAMSGH. Residues 363–378 show a composition bias toward polar residues; the sequence is QHCSDSQRTSSAMSGH. A phosphoserine mark is found at serine 376, serine 379, serine 381, and serine 384. Positions 439-451 are enriched in polar residues; sequence SETSDSSQGQDSE. Residues 439–477 are disordered; sequence SETSDSSQGQDSESVLLVDEAGGSGRAGPAPKGSSLQVT.

This sequence belongs to the G-protein coupled receptor 1 family. Interacts with FEM1A. Post-translationally, phosphorylation mediates agonist-mediated desensitization by promoting cytoplasmic retention.

Its subcellular location is the cell membrane. Receptor for prostaglandin E2 (PGE2). The activity of this receptor is mediated by G(s) proteins that stimulate adenylate cyclase. Has a relaxing effect on smooth muscle. May play an important role in regulating renal hemodynamics, intestinal epithelial transport, adrenal aldosterone secretion, and uterine function. The protein is Prostaglandin E2 receptor EP4 subtype (PTGER4) of Pan troglodytes (Chimpanzee).